The chain runs to 396 residues: Elongation factor Tu (396 aa).

The 197-residue stretch at 10 to 206 (KPHVNVGTIG…ALDSYIPDPE (197 aa)) folds into the tr-type G domain. Residues 19–26 (GHVDHGKT) are G1. Residue 19-26 (GHVDHGKT) participates in GTP binding. Thr26 contributes to the Mg(2+) binding site. Positions 60-64 (GITIN) are G2. The interval 81-84 (DCPG) is G3. GTP is bound by residues 81–85 (DCPGH) and 136–139 (NKCD). The interval 136-139 (NKCD) is G4. The G5 stretch occupies residues 174–176 (SAL).

It belongs to the TRAFAC class translation factor GTPase superfamily. Classic translation factor GTPase family. EF-Tu/EF-1A subfamily. In terms of assembly, monomer.

It is found in the cytoplasm. The catalysed reaction is GTP + H2O = GDP + phosphate + H(+). In terms of biological role, GTP hydrolase that promotes the GTP-dependent binding of aminoacyl-tRNA to the A-site of ribosomes during protein biosynthesis. This Dechloromonas aromatica (strain RCB) protein is Elongation factor Tu.